Here is a 618-residue protein sequence, read N- to C-terminus: uncharacterized protein (618 aa).

The segment at residues 18-47 (SCQRCRQRKIKCDRLHPCFQCVKSNSQCFY) is a DNA-binding region (zn(2)-C6 fungal-type). A Phosphoserine modification is found at serine 598.

The protein localises to the nucleus. This is an uncharacterized protein from Schizosaccharomyces pombe (strain 972 / ATCC 24843) (Fission yeast).